Reading from the N-terminus, the 164-residue chain is Bacterial microcompartment shell protein EutK (164 aa).

Residues 4–88 (ALGLLEVDGM…PEEDTQWLIG (85 aa)) enclose the BMC domain. Positions 108–164 (EFAEALLALLASVRQGMTAGEVAAHFGWPLEQARNVLEQLFSDGALRKRSSRYRIKN) constitute a EutK-Ctail domain.

It belongs to the bacterial microcompartments protein family. As to quaternary structure, monomeric in solution.

It is found in the bacterial microcompartment. It functions in the pathway amine and polyamine degradation; ethanolamine degradation. In terms of biological role, a component of the bacterial microcompartment (BMC) shell dedicated to ethanolamine degradation. Expression of eutK, eutL, eutM, eutN, eutS (eutSMNLK) in E.coli leads to formation of a single BMC. Coexpression of eutQ with eutSMNLK permits E.coli to make cells with more than one mobile BMC, as is usual in vivo. The ethanolamine (EA) catabolic bacterial microcompartment (BMC) probably concentrates low levels of ethanolamine catabolic enzymes, concentrates volatile reaction intermediates, keeps the level of toxic acetaldehyde low, generates enough acetyl-CoA to support cell growth, and maintains a pool of free coenzyme A (CoA) and NAD. Deletion of BMC genes (eutK, eutL, eutM) restores growth of eutD deletions, suggesting there are dedicated pools of coenzyme A (CoA) and NAD in the BMC. Its function is as follows. Expression of the eut operon allows this bacteria to use ethanolamine as a carbon, nitrogen and energy source. It relies on cobalamin (vitamin B12) both as a cofactor for the ethanolamine ammonia-lyase (EAL) activity and to induce the operon. EA enhances bacterial survival in macrophages in a concentration-dependent manner, suggesting it is an important nutrient during infection. The chain is Bacterial microcompartment shell protein EutK (eutK) from Salmonella typhimurium (strain LT2 / SGSC1412 / ATCC 700720).